Reading from the N-terminus, the 157-residue chain is Small ribosomal subunit protein uS7 (157 aa).

The protein belongs to the universal ribosomal protein uS7 family. In terms of assembly, part of the 30S ribosomal subunit. Contacts proteins S9 and S11.

Its function is as follows. One of the primary rRNA binding proteins, it binds directly to 16S rRNA where it nucleates assembly of the head domain of the 30S subunit. Is located at the subunit interface close to the decoding center, probably blocks exit of the E-site tRNA. The sequence is that of Small ribosomal subunit protein uS7 from Caulobacter vibrioides (strain ATCC 19089 / CIP 103742 / CB 15) (Caulobacter crescentus).